The chain runs to 311 residues: Probable cell division protein WhiA (311 aa).

Positions 274–308 (SLKELGEMIPSGAISKSGINHRIRKINEFAEKLRE) form a DNA-binding region, H-T-H motif.

This sequence belongs to the WhiA family.

Functionally, involved in cell division and chromosome segregation. In Enterococcus faecalis (strain ATCC 700802 / V583), this protein is Probable cell division protein WhiA.